Here is a 24-residue protein sequence, read N- to C-terminus: Frenatin-4 (24 aa).

In terms of tissue distribution, expressed by the skin glands.

The protein resides in the secreted. Very weak antimicrobial peptide since it does not show activity below 100 ug/ml against Bacillus cereus, Escherichia coli, Leuconostoc mesenteroides, Micrococcus luteus, Pastewella haemolytica, Staphylococcus aureus, Streptococcus faecalis and Streptococcus uberis. The chain is Frenatin-4 from Nyctimystes infrafrenatus (White-lipped tree frog).